We begin with the raw amino-acid sequence, 497 residues long: Transcriptional regulator ATRX (497 aa).

Glycyl lysine isopeptide (Lys-Gly) (interchain with G-Cter in SUMO2) cross-links involve residues Lys-1 and Lys-5. The ADD domain maps to 21–158 (KKRGEGLHGI…LEQLLQQNKK (138 aa)). The GATA-type; atypical zinc-finger motif lies at 32-68 (SCTACGQQVNHFQKDSIYRHPTLKVLICKNCYKYYMS). A PHD-type; atypical zinc finger spans residues 79–134 (DEQCRWCAEGGNLICCDFCHNAFCKKCILRNLGRKELSAIMDENSQWYCYICRPEP). Lys-161 is covalently cross-linked (Glycyl lysine isopeptide (Lys-Gly) (interchain with G-Cter in SUMO2)). Phosphoserine is present on Ser-178. A Glycyl lysine isopeptide (Lys-Gly) (interchain with G-Cter in SUMO2) cross-link involves residue Lys-300. The tract at residues 346–368 (PVHKTTSAEDKKSSRKDPHFEPA) is disordered. Positions 351–365 (TSAEDKKSSRKDPHF) are enriched in basic and acidic residues.

Belongs to the SNF2/RAD54 helicase family. In terms of assembly, interacts with DAXX to form the chromatin remodeling complex ATRX:DAXX. Probably binds EZH2. Binds annexin V in a calcium and phosphatidylcholine/phosphatidylserine-dependent manner. Interacts directly with CBX5 via the PxVxL motif. Interacts with RAD50, MRE11 and NBN; indicative for an association with the MRN complex. Interacts with histone MACROH2A1. Interacts with histone H3 peptides methylated at 'Lys-10' with preferences H3K9me3 &gt; H3K9me2 &gt; H3K9me1. Interacts with histone H3 peptides unmethylated at 'Lys-5' (H3K4me0). Interacts with MECP2, SMC1 and SMC3. Interacts with SETDB1, TRIM28 and ZNF274. In terms of tissue distribution, expressed in all tissues except developing testis.

The protein localises to the nucleus. The protein resides in the chromosome. Its subcellular location is the telomere. It localises to the PML body. The enzyme catalyses ATP + H2O = ADP + phosphate + H(+). Functionally, involved in transcriptional regulation and chromatin remodeling. Facilitates DNA replication in multiple cellular environments and is required for efficient replication of a subset of genomic loci. Binds to DNA tandem repeat sequences in both telomeres and euchromatin and in vitro binds DNA quadruplex structures. May help stabilizing G-rich regions into regular chromatin structures by remodeling G4 DNA and incorporating H3.3-containing nucleosomes. Catalytic component of the chromatin remodeling complex ATRX:DAXX which has ATP-dependent DNA translocase activity and catalyzes the replication-independent deposition of histone H3.3 in pericentric DNA repeats outside S-phase and telomeres, and the in vitro remodeling of H3.3-containing nucleosomes. Its heterochromatin targeting is proposed to involve a combinatorial readout of histone H3 modifications (specifically methylation states of H3K9 and H3K4) and association with CBX5. May be involved in transcriptional regulation of telomeric repeat-containing RNA (TERRA). Acts as a negative regulator of chromatin incorporation of transcriptionally repressive histone MACROH2A1, particularily at telomeres. Binds to zinc-finger coding genes with atypical chromatin signatures and regulates its H3K9me3 levels. Forms a complex with ZNF274, TRIM28 and SETDB1 to facilitate the deposition and maintenance of H3K9me3 at the 3' exons of zinc-finger genes. The polypeptide is Transcriptional regulator ATRX (ATRX) (Notamacropus eugenii (Tammar wallaby)).